Reading from the N-terminus, the 504-residue chain is Cytochrome P450 monooxygenase iccC (504 aa).

The chain crosses the membrane as a helical span at residues 7–26; sequence LPWILLYTGFLAIFLSRLFS. Residues Asn134, Asn312, Asn365, and Asn374 are each glycosylated (N-linked (GlcNAc...) asparagine). Cys452 lines the heme pocket. Residue Asn494 is glycosylated (N-linked (GlcNAc...) asparagine).

This sequence belongs to the cytochrome P450 family. Heme serves as cofactor.

The protein resides in the membrane. It catalyses the reaction (3E,5S)-3-[(2E,4E,8S,10E,12Z)-1-hydroxy-4,8-dimethyltetradeca-2,4,10,12-tetraen-1-ylidene]-5-[(4-hydroxyphenyl)methyl]pyrrolidine-2,4-dione + reduced [NADPH--hemoprotein reductase] + O2 = 3-[(2E,4E,8S,10E,12Z)-4,8-dimethyltetradeca-2,4,10,12-tetraenoyl]-4-hydroxy-5-(4-hydroxyphenyl)-1,2-dihydropyridin-2-one + oxidized [NADPH--hemoprotein reductase] + 2 H2O. The protein operates within mycotoxin biosynthesis. Its function is as follows. Cytochrome P450 monooxygenase; part of the gene cluster that mediates the biosynthesis of ilicicolin H, a 4-hydroxy-2-pyridonealkaloid that has potent and broad antifungal activities by inhibiting the mitochondrial respiration chain. IccC catalyzes the ring expansion of the tetramate intermediate to the acyclic 2-pyridone intermediate that contains the trans bis-diene chain. The biosynthesis of ilicicolin H starts with formation of the tetramic acid by the hybrid PKS-NRPS synthetase iccA with the partnering trans-enoyl reductase iccB since iccA lacks a designated enoylreductase (ER) domain. The cytochrome P450 monooxygenase iccC then catalyzes the ring expansion of the tetramate to the acyclic 2-pyridone. The pericyclase iccD further converts the acyclic 2-pyridone into 8-epi-ilicicolin H. Finally, the epimerase iccE converts 8-epi-ilicicolin H into ilicicolin H via epimerization. IccA to iccE are sufficient for ilicicolin H biosynthesis and the roles of the remaining enzymes, iccF, iccG and iccH within the pathway have still to be determined. This Talaromyces variabilis (Penicillium variabile) protein is Cytochrome P450 monooxygenase iccC.